Reading from the N-terminus, the 542-residue chain is La-related protein 7 homolog (542 aa).

Residues 112–239 enclose the HTH La-type RNA-binding domain; the sequence is VAEELDIKES…KRRFPFNLEQ (128 aa). The region spanning 247 to 335 is the RRM domain; it reads RTLYIDFLPP…GSIRIITYKK (89 aa). In terms of domain architecture, xRRM spans 374–542; sequence EIKQNCLIKI…KQNITQNYNK (169 aa).

Belongs to the LARP7 family. Component of the telomerase holoenzyme complex, composed of the catalytic core (the catalytic subunit TERT, the telomerase RNA template component TER and TAP65/p65), which is associated with two heterotrimeric subcomplexes: (i) the replication protein A (RPA)-related subcomplex, composed of TEB1, RPA2/TEB2 and RPA3/TEB3 and (ii) the CST-like subcomplex, composed of TAP75/p75, TAP45/p45 and TAP19/p19. TEB1 and the CST-like subcomplex are tethered to the catalytic core by TAP50/p50.

The protein localises to the chromosome. Its subcellular location is the telomere. RNA-binding protein required for assembly of the holoenzyme telomerase ribonucleoprotein (RNP) complex. Telomerase is an essential ribonucleoprotein enzyme that copies new telomeric repeats onto chromosome ends by repetitively synthesizing the short telomere-repeat sequence 5'-TTGGGG-3' using an RNA template component TER. TAP65/p65 specifically binds telomerase RNA template TER and is required for biogenesis and placement of the TER stem-terminus element: TAP65/p65 first protects the 3'-end of TER from degradation and acts as a chaperone to correctly fold TER for protein binding; it then bends TER stem-loop IV to position it for interaction of stem-loop IV with catalytic TERT RNA-binding domain. This chain is La-related protein 7 homolog, found in Tetrahymena thermophila (strain SB210).